The chain runs to 440 residues: Oligodendrocyte-myelin glycoprotein (440 aa).

Positions 1–24 (MEYQILKMSSCLFILLFLTPGILC) are cleaved as a signal peptide. Residues 25–55 (ICPLQCTCTERHRHVDCSGRNLTTLPPGLQE) enclose the LRRNT domain. Asn45 and Asn61 each carry an N-linked (GlcNAc...) asparagine glycan. LRR repeat units follow at residues 56–78 (NIIH…TPYT), 79–100 (NLRT…LPRS), 101–121 (LWNM…DTAY), 124–145 (NLKY…KNTL), 147–168 (SLEV…MPSK), 169–189 (LHIV…TLIN), 192–213 (NLTH…SFDQ), and 216–239 (QLQE…TYLL). Asn103 carries an N-linked (GlcNAc...) asparagine glycan. Asn152, Asn176, Asn189, Asn192, and Asn234 each carry an N-linked (GlcNAc...) asparagine glycan. Ser/Thr-rich repeat units lie at residues 229 to 270 (CDHK…YPTP), 271 to 292 (PGFT…INSL), 293 to 335 (SMVT…VAYP), 336 to 377 (EDTP…PPSP), and 378 to 416 (VTLS…TRPP). Asn364 and Asn389 each carry an N-linked (GlcNAc...) asparagine glycan. Ser417 carries the GPI-anchor amidated serine lipid modification. Positions 418-440 (AASAWKVNASLLLMLNAVVMLAG) are cleaved as a propeptide — removed in mature form. Asn425 is a glycosylation site (N-linked (GlcNAc...) asparagine).

In terms of assembly, binds to RTN4R. Post-translationally, O-glycosylated in its Ser/Thr-rich repeat domain. As to expression, oligodendrocytes and myelin of the central nervous system.

Its subcellular location is the cell membrane. In terms of biological role, cell adhesion molecule contributing to the interactive process required for myelination in the central nervous system. This is Oligodendrocyte-myelin glycoprotein (Omg) from Mus musculus (Mouse).